The following is a 92-amino-acid chain: Small ribosomal subunit protein uS19 (92 aa).

Residues 73–92 form a disordered region; that stretch reads EFSPSRTYYGHAADKKAKRR.

The protein belongs to the universal ribosomal protein uS19 family.

In terms of biological role, protein S19 forms a complex with S13 that binds strongly to the 16S ribosomal RNA. This Maricaulis maris (strain MCS10) (Caulobacter maris) protein is Small ribosomal subunit protein uS19.